A 64-amino-acid polypeptide reads, in one-letter code: Large ribosomal subunit protein bL35 (64 aa).

It belongs to the bacterial ribosomal protein bL35 family.

This chain is Large ribosomal subunit protein bL35, found in Lactiplantibacillus plantarum (strain ATCC BAA-793 / NCIMB 8826 / WCFS1) (Lactobacillus plantarum).